The following is a 485-amino-acid chain: Glutamate--tRNA ligase (485 aa).

The 'HIGH' region signature appears at 11–21 (PSPTGHLHIGN). The 'KMSKS' region signature appears at 252 to 256 (KLSKR). Residue Lys255 coordinates ATP.

The protein belongs to the class-I aminoacyl-tRNA synthetase family. Glutamate--tRNA ligase type 1 subfamily. As to quaternary structure, monomer.

The protein resides in the cytoplasm. The catalysed reaction is tRNA(Glu) + L-glutamate + ATP = L-glutamyl-tRNA(Glu) + AMP + diphosphate. In terms of biological role, catalyzes the attachment of glutamate to tRNA(Glu) in a two-step reaction: glutamate is first activated by ATP to form Glu-AMP and then transferred to the acceptor end of tRNA(Glu). This chain is Glutamate--tRNA ligase, found in Bacillus thuringiensis (strain Al Hakam).